The following is a 430-amino-acid chain: MAPSPEGVTVVLGAQWGDEGKGKLVDILAAEADICARCAGGNNAGHTIVVRNDKGEKTSYAFNLLPSGLINPECTAFIGSGVVVHVPSLFNELDTLERKGLKVAGRLFVSDRAHLVMGFHQIVDGLKEVELGGSSIGTTRKGIGPAYSSKASRSGLRVHHLFDPTFPAKFRKLVEGRFKRYGHFEFDTEGEIEMYLAFAERLRPFIVDGPTFMHNAVNSGKRVLVEGANALMLDLDYGTYPFVTSSSTSIGGVVSGLGISPFAIKRVVGVIKAYTTRVGGGPFPTEDLATVGETLQEVGAEYGTVTGRRRRCGWLDLVVMKYSTMINGYTSLNLTKLDVLDGFDEIKVATGYKIDGVEVEGFPADLDRLAKVEVQYATLPGWKTDISNCKTYQEFPENAKAYIKFIEDYLGVKVQYVGVGPGRDQNVIIF.

Residues 17–23 (GDEGKGK) and 45–47 (GHT) each bind GTP. The active-site Proton acceptor is the Asp18. Mg(2+) is bound by residues Asp18 and Gly45. Residues 18 to 21 (DEGK), 43 to 46 (NAGH), Thr139, Arg153, Asn229, Thr244, and Arg308 each bind IMP. His46 acts as the Proton donor in catalysis. 304-310 (TVTGRRR) is a substrate binding site. Residues Arg310, 336–338 (KLD), and 418–420 (GVG) contribute to the GTP site.

The protein belongs to the adenylosuccinate synthetase family. Homodimer. The cofactor is Mg(2+).

The protein localises to the cytoplasm. The catalysed reaction is IMP + L-aspartate + GTP = N(6)-(1,2-dicarboxyethyl)-AMP + GDP + phosphate + 2 H(+). The protein operates within purine metabolism; AMP biosynthesis via de novo pathway; AMP from IMP: step 1/2. In terms of biological role, plays an important role in the de novo pathway and in the salvage pathway of purine nucleotide biosynthesis. Catalyzes the first committed step in the biosynthesis of AMP from IMP. The polypeptide is Adenylosuccinate synthetase (Cryptococcus neoformans var. neoformans serotype D (strain B-3501A) (Filobasidiella neoformans)).